The following is a 776-amino-acid chain: 5-methyltetrahydropteroyltriglutamate--homocysteine methyltransferase (776 aa).

5-methyltetrahydropteroyltri-L-glutamate contacts are provided by residues 13-16 and lysine 127; that span reads RELK. Residues 450–452 and glutamate 503 contribute to the L-homocysteine site; that span reads IGS. L-methionine-binding positions include 450–452 and glutamate 503; that span reads IGS. Position 580 (tryptophan 580) interacts with 5-methyltetrahydropteroyltri-L-glutamate. Aspartate 618 contacts L-homocysteine. Aspartate 618 provides a ligand contact to L-methionine. Glutamate 624 contributes to the 5-methyltetrahydropteroyltri-L-glutamate binding site. Zn(2+) is bound by residues histidine 660, cysteine 662, and glutamate 684. The active-site Proton donor is the histidine 713. Cysteine 745 contributes to the Zn(2+) binding site.

It belongs to the vitamin-B12 independent methionine synthase family. Requires Zn(2+) as cofactor.

It carries out the reaction 5-methyltetrahydropteroyltri-L-glutamate + L-homocysteine = tetrahydropteroyltri-L-glutamate + L-methionine. The protein operates within amino-acid biosynthesis; L-methionine biosynthesis via de novo pathway; L-methionine from L-homocysteine (MetE route): step 1/1. Its function is as follows. Catalyzes the transfer of a methyl group from 5-methyltetrahydrofolate to homocysteine resulting in methionine formation. This Mesorhizobium japonicum (strain LMG 29417 / CECT 9101 / MAFF 303099) (Mesorhizobium loti (strain MAFF 303099)) protein is 5-methyltetrahydropteroyltriglutamate--homocysteine methyltransferase.